We begin with the raw amino-acid sequence, 100 residues long: Urease subunit gamma (100 aa).

It belongs to the urease gamma subunit family. As to quaternary structure, heterotrimer of UreA (gamma), UreB (beta) and UreC (alpha) subunits. Three heterotrimers associate to form the active enzyme.

Its subcellular location is the cytoplasm. It carries out the reaction urea + 2 H2O + H(+) = hydrogencarbonate + 2 NH4(+). It participates in nitrogen metabolism; urea degradation; CO(2) and NH(3) from urea (urease route): step 1/1. The sequence is that of Urease subunit gamma from Leptothrix cholodnii (strain ATCC 51168 / LMG 8142 / SP-6) (Leptothrix discophora (strain SP-6)).